We begin with the raw amino-acid sequence, 193 residues long: Pyridoxal 5'-phosphate synthase subunit PdxT (193 aa).

An L-glutamine-binding site is contributed by Gly-52–Ser-54. The Nucleophile role is filled by Cys-84. L-glutamine contacts are provided by residues Arg-111 and Ile-139 to Arg-140. Active-site charge relay system residues include His-176 and Glu-178.

Belongs to the glutaminase PdxT/SNO family. As to quaternary structure, in the presence of PdxS, forms a dodecamer of heterodimers. Only shows activity in the heterodimer.

The catalysed reaction is aldehydo-D-ribose 5-phosphate + D-glyceraldehyde 3-phosphate + L-glutamine = pyridoxal 5'-phosphate + L-glutamate + phosphate + 3 H2O + H(+). The enzyme catalyses L-glutamine + H2O = L-glutamate + NH4(+). Its pathway is cofactor biosynthesis; pyridoxal 5'-phosphate biosynthesis. Catalyzes the hydrolysis of glutamine to glutamate and ammonia as part of the biosynthesis of pyridoxal 5'-phosphate. The resulting ammonia molecule is channeled to the active site of PdxS. The protein is Pyridoxal 5'-phosphate synthase subunit PdxT of Pasteurella multocida (strain Pm70).